The chain runs to 293 residues: ESX-3 secretion-associated protein EspG3 (293 aa).

The protein belongs to the EspG family.

It localises to the cytoplasm. This chain is ESX-3 secretion-associated protein EspG3, found in Mycolicibacterium smegmatis (strain ATCC 700084 / mc(2)155) (Mycobacterium smegmatis).